Consider the following 120-residue polypeptide: cAMP-responsive element-binding protein-like 2 (120 aa).

Positions 1–24 (MDDSKVVGGKVKKPGKRGRKPAKI) are disordered. Residues 10–21 (KVKKPGKRGRKP) show a composition bias toward basic residues. The bZIP domain maps to 23–86 (KIDLKAKLER…MAMDQGKIPS (64 aa)). The interval 29 to 60 (KLERSRQSARECRARKKLRYQYLEELVSSRER) is basic motif. A leucine-zipper region spans residues 62-69 (ICALREEL). The interval 93–120 (TGEEQNKSQQNSSRHTKAGKTDANSNSW) is disordered.

The protein belongs to the bZIP family. ATF subfamily. As to quaternary structure, interacts with CREB1; regulates CREB1 phosphorylation, stability and transcriptional activity. In terms of processing, phosphorylated by AMPK.

The protein resides in the nucleus. Probable regulator of CREB1 transcriptional activity which is involved in adipose cells differentiation. May also play a regulatory role in the cell cycle. Identification in a chromosomal region frequently deleted in various cancers suggests that it might act as a tumor suppressor. In Homo sapiens (Human), this protein is cAMP-responsive element-binding protein-like 2 (CREBL2).